A 137-amino-acid chain; its full sequence is Large ribosomal subunit protein uL16 (137 aa).

It belongs to the universal ribosomal protein uL16 family. In terms of assembly, part of the 50S ribosomal subunit.

In terms of biological role, binds 23S rRNA and is also seen to make contacts with the A and possibly P site tRNAs. This chain is Large ribosomal subunit protein uL16, found in Baumannia cicadellinicola subsp. Homalodisca coagulata.